Reading from the N-terminus, the 63-residue chain is Synergistic-type venom protein C9S3, chain 1 (63 aa).

3 cysteine pairs are disulfide-bonded: cysteine 3/cysteine 24, cysteine 17/cysteine 42, and cysteine 46/cysteine 57.

The protein belongs to the three-finger toxin family. Short-chain subfamily. Aminergic toxin sub-subfamily. Heterodimer of C9S3 chain 1 and chain 2 (AC P01409); disulfide-linked. As to expression, expressed by the venom gland.

The protein resides in the secreted. Its function is as follows. This protein shows a synergetic toxic effect in that it enhances the toxicity of other toxins. The sequence is that of Synergistic-type venom protein C9S3, chain 1 from Dendroaspis angusticeps (Eastern green mamba).